Here is a 1312-residue protein sequence, read N- to C-terminus: Retinoblastoma-like protein A (1312 aa).

Disordered stretches follow at residues 1–67 (MMAH…NNEN), 168–231 (SSSS…KNSS), 336–359 (HNYN…NNNN), 536–611 (NNNN…IYGT), 987–1023 (NNNN…NNNN), 1168–1236 (KKND…NNTE), and 1249–1312 (EESP…RLKS). Low complexity predominate over residues 10–67 (TNINTKTTAPTTTTTEQQPEQQQQQPEQQQQEKQNNNNNNNNNNNNNNNINNNENNEN). Positions 36–117 (EQQQQEKQNN…TSSALNVDQD (82 aa)) form a coiled coil. Positions 168-179 (SSSSFQPDNNSK) are enriched in polar residues. The span at 180 to 189 (IKGRKIRKTN) shows a compositional bias: basic residues. The stretch at 195-230 (NNDSNEEEEETTTDTEEEEEEDTLLNENNNSINKNS) forms a coiled coil. Acidic residues predominate over residues 198–218 (SNEEEEETTTDTEEEEEEDTL). Composition is skewed to low complexity over residues 219-231 (LNEN…KNSS), 337-359 (NYNN…NNNN), and 536-595 (NNNN…SSSS). 3 stretches are compositionally biased toward low complexity: residues 1185 to 1234 (NNNN…NNNN), 1251 to 1275 (SPST…NNNK), and 1286 to 1305 (SPSS…SSSG).

Belongs to the retinoblastoma protein (RB) family.

Its subcellular location is the nucleus. Functionally, key regulator of entry into cell division. Directly involved in heterochromatin formation by maintaining overall chromatin structure and, in particular, that of constitutive heterochromatin by stabilizing histone methylation. Controls histone H4 'Lys-20' trimethylation. Probably acts as a transcription repressor by recruiting chromatin-modifying enzymes to promoters. Plays a dual role, regulating cell-cycle progression and transcriptional events leading to terminal differentiation. In the absence of a G1 phase, functions in late G2 controlling the expression of both S-phase and mitotic genes. Controls stalk/spore preference by suppressing the DIF response in cells destined for the spore pathway. DIF is a chlorinated hydroxyphenone made by cells of spore pathway that promotes stalk differentiation. This chain is Retinoblastoma-like protein A, found in Dictyostelium discoideum (Social amoeba).